A 196-amino-acid polypeptide reads, in one-letter code: Probable GTP-binding protein EngB (196 aa).

The EngB-type G domain occupies 22–193 (SLPEVAFVGR…LEEIRKAKGE (172 aa)). GTP contacts are provided by residues 30–37 (GRSNVGKS), 57–61 (GRTQL), 75–78 (DLPG), 142–145 (TKSD), and 172–174 (FSA). 2 residues coordinate Mg(2+): Ser-37 and Thr-59.

Belongs to the TRAFAC class TrmE-Era-EngA-EngB-Septin-like GTPase superfamily. EngB GTPase family. Mg(2+) serves as cofactor.

In terms of biological role, necessary for normal cell division and for the maintenance of normal septation. The protein is Probable GTP-binding protein EngB of Syntrophus aciditrophicus (strain SB).